The sequence spans 140 residues: Coiled-coil domain-containing protein 126 (140 aa).

The N-terminal stretch at 1-35 (MFRTISRKNMSQKLSFLLLVFGLIWGLMLLHYTLQ) is a signal peptide. A glycan (N-linked (GlcNAc...) asparagine) is linked at asparagine 110. A compositionally biased stretch (low complexity) spans 118–130 (NGTNGNLVPVTTN). Positions 118 to 140 (NGTNGNLVPVTTNKRTSVSGSVR) are disordered. A compositionally biased stretch (polar residues) spans 131–140 (KRTSVSGSVR).

The protein localises to the secreted. In Mus musculus (Mouse), this protein is Coiled-coil domain-containing protein 126 (Ccdc126).